We begin with the raw amino-acid sequence, 886 residues long: Isoleucine--tRNA ligase (886 aa).

The 'HIGH' region signature appears at 60–70; it reads PYANGDIHIGH. Glu-546 is a binding site for L-isoleucyl-5'-AMP. The 'KMSKS' region motif lies at 587–591; that stretch reads KMSKS. An ATP-binding site is contributed by Lys-590. Positions 856, 859, 870, and 873 each coordinate Zn(2+).

The protein belongs to the class-I aminoacyl-tRNA synthetase family. IleS type 1 subfamily. In terms of assembly, monomer. It depends on Zn(2+) as a cofactor.

It is found in the cytoplasm. It carries out the reaction tRNA(Ile) + L-isoleucine + ATP = L-isoleucyl-tRNA(Ile) + AMP + diphosphate. Functionally, catalyzes the attachment of isoleucine to tRNA(Ile). As IleRS can inadvertently accommodate and process structurally similar amino acids such as valine, to avoid such errors it has two additional distinct tRNA(Ile)-dependent editing activities. One activity is designated as 'pretransfer' editing and involves the hydrolysis of activated Val-AMP. The other activity is designated 'posttransfer' editing and involves deacylation of mischarged Val-tRNA(Ile). The protein is Isoleucine--tRNA ligase of Mesomycoplasma hyopneumoniae (strain 7448) (Mycoplasma hyopneumoniae).